We begin with the raw amino-acid sequence, 126 residues long: UPF0102 protein gll3754 (126 aa).

Belongs to the UPF0102 family.

This chain is UPF0102 protein gll3754, found in Gloeobacter violaceus (strain ATCC 29082 / PCC 7421).